We begin with the raw amino-acid sequence, 544 residues long: Secreted aspartic protease 9 (544 aa).

Residues 1-17 (MRLNSVALLSLVATALA) form the signal peptide. The tract at residues 31-50 (GESKDDLSPEDDSNPRFVKR) is disordered. The Peptidase A1 domain occupies 65–479 (YMATLKIGSN…DLDDYEVSLA (415 aa)). 83 to 85 (DTG) contacts pepstatin A. Cysteines 98 and 195 form a disulfide. The active site involves Thr-167. N-linked (GlcNAc...) asparagine glycans are attached at residues Asn-212, Asn-240, and Asn-252. Asp-371 is a catalytic residue. 371–375 (DTGST) contacts pepstatin A. A disulfide bridge connects residues Cys-406 and Cys-441. Residues Asn-422 and Asn-499 are each glycosylated (N-linked (GlcNAc...) asparagine). The tract at residues 500–520 (SSGSGTTSSSGTSTSTSTRHS) is disordered.

This sequence belongs to the peptidase A1 family. As to quaternary structure, monomer. In terms of processing, the GPI-anchor is attached to the protein in the endoplasmic reticulum and serves to target the protein to the cell surface. There, the glucosamine-inositol phospholipid moiety is cleaved off and the GPI-modified mannoprotein is covalently attached via its lipidless GPI glycan remnant to the 1,6-beta-glucan of the outer cell wall layer.

The protein resides in the cell membrane. It is found in the secreted. It localises to the cell wall. The catalysed reaction is Preferential cleavage at the carboxyl of hydrophobic amino acids, but fails to cleave 15-Leu-|-Tyr-16, 16-Tyr-|-Leu-17 and 24-Phe-|-Phe-25 of insulin B chain. Activates trypsinogen, and degrades keratin.. Its function is as follows. Secreted aspartic peptidases (SAPs) are a group of ten acidic hydrolases considered as key virulence factors. These enzymes supply the fungus with nutrient amino acids as well as are able to degrade the selected host's proteins involved in the immune defense. Moreover, acts toward human hemoglobin though limited proteolysis to generate a variety of antimicrobial hemocidins, enabling to compete with the other microorganisms of the same physiological niche using the microbicidal peptides generated from the host protein. Plays a key role in defense against host by cleaving histatin-5 (Hst 5), a peptide from human saliva that carries out fungicidal activity. The cleavage rate decreases in an order of SAP2 &gt; SAP9 &gt; SAP3 &gt; SAP7 &gt; SAP4 &gt; SAP1 &gt; SAP8. The first cleavage occurs between residues 'Lys-17' and 'His-18' of Hst 5, giving DSHAKRHHGYKRKFHEK and HHSHRGY peptides. Simultaneously, the DSHAKRHHGYKRK peptide is also formed. Further fragmentation by SAP9 results in FHEK product. The polypeptide is Secreted aspartic protease 9 (Candida albicans (Yeast)).